The primary structure comprises 243 residues: Small ribosomal subunit protein eS4 (243 aa).

An S4 RNA-binding domain is found at Ile37 to Asp99.

The protein belongs to the eukaryotic ribosomal protein eS4 family.

The sequence is that of Small ribosomal subunit protein eS4 (rps4e) from Sulfurisphaera tokodaii (strain DSM 16993 / JCM 10545 / NBRC 100140 / 7) (Sulfolobus tokodaii).